The chain runs to 457 residues: Multidrug resistance protein MdtK (457 aa).

Residues Met-1–Leu-10 are Cytoplasmic-facing. Residues Leu-11 to Val-31 traverse the membrane as a helical segment. Residues Asp-32–Ser-52 are Periplasmic-facing. A helical membrane pass occupies residues Ile-53–Ala-73. Over Gln-74–Phe-92 the chain is Cytoplasmic. The helical transmembrane segment at Trp-93–Ile-113 threads the bilayer. The Periplasmic segment spans residues Arg-114 to Lys-126. A helical membrane pass occupies residues Ala-127–Ala-147. Topologically, residues Arg-148 to Pro-159 are cytoplasmic. The helical transmembrane segment at Gly-160–Tyr-180 threads the bilayer. Topologically, residues Gly-181–Leu-188 are periplasmic. The helical transmembrane segment at Gly-189–Val-209 threads the bilayer. Residues Ser-210 to Gly-242 are Cytoplasmic-facing. The chain crosses the membrane as a helical span at residues Leu-243 to Val-263. At Ser-264 to Gln-275 the chain is on the periplasmic side. The chain crosses the membrane as a helical span at residues Ile-276–Thr-296. At Ile-297–Thr-313 the chain is on the cytoplasmic side. A helical membrane pass occupies residues Ala-314–Val-334. Over Ser-335–Glu-349 the chain is Periplasmic. The chain crosses the membrane as a helical span at residues Val-350–Ile-370. At Gln-371–Ser-386 the chain is on the cytoplasmic side. Residues Ile-387–Ala-407 form a helical membrane-spanning segment. The Periplasmic segment spans residues Leu-408–Gly-417. A helical transmembrane segment spans residues Pro-418 to Leu-438. Over Arg-439–Arg-457 the chain is Cytoplasmic.

Belongs to the multi antimicrobial extrusion (MATE) (TC 2.A.66.1) family. MdtK subfamily.

Its subcellular location is the cell inner membrane. Functionally, multidrug efflux pump that functions probably as a Na(+)/drug antiporter. The protein is Multidrug resistance protein MdtK of Shigella flexneri serotype 5b (strain 8401).